Consider the following 408-residue polypeptide: Peptidase T (408 aa).

Histidine 78 is a binding site for Zn(2+). Residue aspartate 80 is part of the active site. Aspartate 140 serves as a coordination point for Zn(2+). Catalysis depends on glutamate 174, which acts as the Proton acceptor. Residues glutamate 175, aspartate 197, and histidine 379 each coordinate Zn(2+).

It belongs to the peptidase M20B family. It depends on Zn(2+) as a cofactor.

It localises to the cytoplasm. It catalyses the reaction Release of the N-terminal residue from a tripeptide.. Functionally, cleaves the N-terminal amino acid of tripeptides. This is Peptidase T from Staphylococcus aureus (strain MRSA252).